The following is a 227-amino-acid chain: NADH-quinone oxidoreductase subunit C (227 aa).

Belongs to the complex I 30 kDa subunit family. As to quaternary structure, NDH-1 is composed of 14 different subunits. Subunits NuoB, C, D, E, F, and G constitute the peripheral sector of the complex.

It localises to the cell inner membrane. It catalyses the reaction a quinone + NADH + 5 H(+)(in) = a quinol + NAD(+) + 4 H(+)(out). In terms of biological role, NDH-1 shuttles electrons from NADH, via FMN and iron-sulfur (Fe-S) centers, to quinones in the respiratory chain. The immediate electron acceptor for the enzyme in this species is believed to be ubiquinone. Couples the redox reaction to proton translocation (for every two electrons transferred, four hydrogen ions are translocated across the cytoplasmic membrane), and thus conserves the redox energy in a proton gradient. This chain is NADH-quinone oxidoreductase subunit C, found in Legionella pneumophila subsp. pneumophila (strain Philadelphia 1 / ATCC 33152 / DSM 7513).